The chain runs to 106 residues: Iron-sulfur cluster assembly protein CyaY (106 aa).

This sequence belongs to the frataxin family.

Its function is as follows. Involved in iron-sulfur (Fe-S) cluster assembly. May act as a regulator of Fe-S biogenesis. The chain is Iron-sulfur cluster assembly protein CyaY from Yersinia pestis bv. Antiqua (strain Antiqua).